The primary structure comprises 256 residues: Cytochrome c-type biogenesis protein CcmE homolog, mitochondrial (256 aa).

A mitochondrion-targeting transit peptide spans 1-57 (MAARLLFRRSSQILRSIQRNPQISSSFESPPCPIFHSLTTASPDPSRLSSLTFLRSL). A helical membrane pass occupies residues 84 to 106 (LWTYALTFSCIAGFVVIVLNQFQ). Heme-binding residues include His-222 and Tyr-226.

Belongs to the CcmE/CycJ family.

The protein localises to the mitochondrion inner membrane. Its subcellular location is the mitochondrion intermembrane space. In terms of biological role, heme-binding chaperone that may be involved in cytochrome c maturation in mitochondria. This Arabidopsis thaliana (Mouse-ear cress) protein is Cytochrome c-type biogenesis protein CcmE homolog, mitochondrial.